Consider the following 73-residue polypeptide: Beta-defensin 50 (73 aa).

An N-terminal signal peptide occupies residues 1 to 23 (MKTLHLLLLISGLLSVFVKGVGS). Disulfide bonds link Cys-34/Cys-63 and Cys-46/Cys-64.

The protein belongs to the beta-defensin family.

It is found in the secreted. Functionally, has bactericidal activity. In Rattus norvegicus (Rat), this protein is Beta-defensin 50 (Defb50).